The sequence spans 357 residues: Arginine kinase (357 aa).

Alanine 2 is subject to N-acetylalanine. The 83-residue stretch at 9–91 (KLDEGFKKLE…FDPIIEDYHK (83 aa)) folds into the Phosphagen kinase N-terminal domain. An L-arginine-binding site is contributed by 64–68 (GVGVY). The region spanning 119–356 (FVISTRVRCG…LELIKIEKEM (238 aa)) is the Phosphagen kinase C-terminal domain. Residues 122 to 126 (STRVR) and histidine 185 each bind ATP. Residue glutamate 225 participates in L-arginine binding. Arginine 229 is an ATP binding site. Cysteine 271 contacts L-arginine. ATP-binding positions include 280 to 284 (RASVH) and 309 to 314 (RGTRGE). Glutamate 314 is an L-arginine binding site.

This sequence belongs to the ATP:guanido phosphotransferase family.

It catalyses the reaction L-arginine + ATP = N(omega)-phospho-L-arginine + ADP + H(+). The chain is Arginine kinase from Eriocheir sinensis (Chinese mitten crab).